The chain runs to 248 residues: Tetraspanin-18 (248 aa).

The Cytoplasmic portion of the chain corresponds to 1–13 (MEGDCLSCMKYLM). Residues 14-34 (FVFNFFIFLGGACLLAIGIWV) traverse the membrane as a helical segment. The Extracellular portion of the chain corresponds to 35–49 (MVDPTGFREIVAANP). Residues 50–70 (LLLTGAYILLAMGGLLFLLGF) traverse the membrane as a helical segment. Topologically, residues 71–83 (LGCCGAVRENKCL) are cytoplasmic. The helical transmembrane segment at 84–104 (LLFFFLFILIIFLAELSAAIL) threads the bilayer. Residues 105–223 (AFIFRENLTR…TFETYVYLAG (119 aa)) lie on the Extracellular side of the membrane. Asn-111 and Asn-129 each carry an N-linked (GlcNAc...) asparagine glycan. The helical transmembrane segment at 224-244 (ALAIGVLAIELFAMIFAMCLF) threads the bilayer. Residues 245–248 (RGIQ) are Cytoplasmic-facing.

The protein belongs to the tetraspanin (TM4SF) family. In terms of assembly, interacts with ORAI1; this interaction regulates ORAI1 exit from the endoplasmic (ER), and/or Golgi, and trafficking to the cell surface. In terms of tissue distribution, highly expressed in primary endothelial cells. Expressed in the embryo heart. Weakly expressed the embryo skeletal muscle.

It is found in the membrane. In terms of biological role, plays a role in the cell surface localization of ORAI1 and may participate in the regulation of Ca(2+) signaling and the VWF release in response to inflammatory stimuli. The protein is Tetraspanin-18 of Homo sapiens (Human).